Reading from the N-terminus, the 529-residue chain is Peptide chain release factor 3 (529 aa).

Positions 11 to 280 (AKRRTFAIIS…GLVEWAPAPM (270 aa)) constitute a tr-type G domain. GTP is bound by residues 20 to 27 (SHPDAGKT), 88 to 92 (DTPGH), and 142 to 145 (NKLD).

Belongs to the TRAFAC class translation factor GTPase superfamily. Classic translation factor GTPase family. PrfC subfamily.

The protein localises to the cytoplasm. Increases the formation of ribosomal termination complexes and stimulates activities of RF-1 and RF-2. It binds guanine nucleotides and has strong preference for UGA stop codons. It may interact directly with the ribosome. The stimulation of RF-1 and RF-2 is significantly reduced by GTP and GDP, but not by GMP. The protein is Peptide chain release factor 3 of Klebsiella pneumoniae subsp. pneumoniae (strain ATCC 700721 / MGH 78578).